The following is a 190-amino-acid chain: Corticoliberin (190 aa).

The first 24 residues, 1-24, serve as a signal peptide directing secretion; sequence MRLPLLVSVGVLLVALLPSPPCRA. Residues 25–147 constitute a propeptide that is removed on maturation; it reads LLSRGPIPGA…QEAPAARKRR (123 aa). Disordered stretches follow at residues 33–53 and 115–151; these read GARQ…LPQP and PRRP…SQEP. The span at 41-53 shows a compositional bias: low complexity; the sequence is PQPLSFFQPLPQP. Ala188 is modified (alanine amide).

Belongs to the sauvagine/corticotropin-releasing factor/urotensin I family. Interacts (via C-terminus) with CRFR1 (via N-terminal extracellular domain). As to expression, produced by the hypothalamus.

It localises to the secreted. Functionally, hormone regulating the release of corticotropin from pituitary gland. Induces NLRP6 in intestinal epithelial cells, hence may influence gut microbiota profile. The polypeptide is Corticoliberin (CRH) (Ovis aries (Sheep)).